Here is a 384-residue protein sequence, read N- to C-terminus: MDQDAFILKEDSEVEREAPGGRESLSDVIGFLDAVLSSEPTDIGGDRSWLHNTINTPQGPGSAHRAKSEGEGEVSTPSTQDNRSGEESRVSGRTSKPEAEAHAGNLDKQNIHRAFGGRTGTNSVSQDLGDGGDSGILENPPNERGYPRSGIEDENREMAAHPDKRGEDQAEGLPEEVRGGTSLPDEGEGGASNNGRSMEPGSSHSARVTGVLVIPSPELEEAVLRRNKRRPTNSGSKPLTPATVPGTRSPPLNRYNSTGSPPGKPPSTQDEHINSGDTPAVRVKDRKPPIGTRSVSDCPANGRPIHPGLETDSTKKGHRREHIIYERDGYIVDESWCNPVCSRIRVIPRRELCVCKTCPKVCKLCRDDIQCMRPDPFCREIFRS.

Disordered stretches follow at residues 1–23 (MDQD…GGRE) and 38–317 (SEPT…TKKG). Residues 7–20 (ILKEDSEVEREAPG) show a composition bias toward basic and acidic residues. Polar residues predominate over residues 50–59 (LHNTINTPQG). Position 68 is a phosphoserine; by host (S68). Positions 83-101 (RSGEESRVSGRTSKPEAEA) are enriched in basic and acidic residues. S125 carries the phosphoserine; by host modification. Over residues 150 to 168 (GIEDENREMAAHPDKRGED) the composition is skewed to basic and acidic residues. Residues 191 to 206 (ASNNGRSMEPGSSHSA) show a composition bias toward polar residues. A phosphoserine; by host mark is found at S192, S249, S257, and S260. Residues H318, C337, C341, C353, C355, C358, C362, and C365 each contribute to the Zn(2+) site.

It belongs to the paramyxoviruses V protein family. Interacts with host IFIH1/MDA5 and DHX58/LGP2. Interacts with host IRF3. Interacts with host RIGI regulatory protein (via CARDs domain) and host TRIM25 (via SPRY domain); these interactions prevent TRIM25-mediated ubiquitination of RIG-I and disrupts downstream RIG-I signaling.

The protein resides in the host cytoplasm. In terms of biological role, plays an essential role in the inhibition of host immune response. Prevents the establishment of cellular antiviral state by blocking interferon-alpha/beta (IFN-alpha/beta) production and signaling pathway. Interacts with host IFIH1/MDA5 and DHX58/LGP2 to inhibit the transduction pathway involved in the activation of IFN-beta promoter, thus protecting the virus against cell antiviral state. Also interacts with and inhibits host IRF3. Blocks the type I interferon signaling pathway by disrupting the RIG-I signaling pathway. In Sendai virus (strain Fushimi) (SeV), this protein is Protein V (P/V/C).